A 122-amino-acid chain; its full sequence is Large ribosomal subunit protein bL12 (122 aa).

It belongs to the bacterial ribosomal protein bL12 family. Homodimer. Part of the ribosomal stalk of the 50S ribosomal subunit. Forms a multimeric L10(L12)X complex, where L10 forms an elongated spine to which 2 to 4 L12 dimers bind in a sequential fashion. Binds GTP-bound translation factors.

Forms part of the ribosomal stalk which helps the ribosome interact with GTP-bound translation factors. Is thus essential for accurate translation. The protein is Large ribosomal subunit protein bL12 of Clostridium botulinum (strain Langeland / NCTC 10281 / Type F).